Reading from the N-terminus, the 189-residue chain is MDSRQQRPQRKTLQWQLAQEQRQQSPPQGLAVASSQPDTKSKPQDDLQTQDWVCEPQELRRPGSRWNISIDERRRLALQRMQERTDTARAPSGDPLGLHPEGQQTETSPSTQSVPTPPLQACETMADPLQDIAHVLAELMSEGVERDVLISQPLRSTENSNAFQDFLAQDAPLWKDENFEAQTSRWPHS.

The tract at residues 1-120 (MDSRQQRPQR…TQSVPTPPLQ (120 aa)) is disordered. Residues 14 to 24 (QWQLAQEQRQQ) are compositionally biased toward low complexity. Residues 70-87 (IDERRRLALQRMQERTDT) show a composition bias toward basic and acidic residues. The segment covering 103-114 (QQTETSPSTQSV) has biased composition (low complexity).

Mainly expressed in spermatocytes and spermatids in testis.

The protein resides in the cytoplasm. Its subcellular location is the cytoplasmic vesicle. It localises to the secretory vesicle. The protein localises to the acrosome. The chain is Testis-expressed protein 22 (Tex22) from Mus musculus (Mouse).